The sequence spans 57 residues: Potassium channel toxin alpha-KTx 23.3 (57 aa).

The signal sequence occupies residues 1–23 (MKMSIVIILLLFTCLIATNGASG). 4 disulfides stabilise this stretch: Cys-26-Cys-46, Cys-32-Cys-51, Cys-36-Cys-53, and Cys-41-Cys-56.

It belongs to the short scorpion toxin superfamily. Potassium channel inhibitor family. Alpha-KTx 23 subfamily. In terms of tissue distribution, expressed by the venom gland.

It localises to the secreted. In terms of biological role, this toxin shows both immunosuppressive and anti-inflammatory activities. It has the potential to inhibit human T cell activation, since it reduces IL-2 secretion and the expression of T cell activation marker CD69 and acts as an anti-inflammatory agent, since it provokes the reduction of secretion of both IFN-gamma and TNF-alpha. In vivo, the delayed-type hypersensitivity response in rat autoimmune disease model is ameliorated in the presence of this toxin. Acts by blocking Kv1.3/KCNA3 potassium channels of T-lymphocytes. The polypeptide is Potassium channel toxin alpha-KTx 23.3 (Scorpiops tibetanus (Scorpion)).